A 44-amino-acid polypeptide reads, in one-letter code: Photosystem I reaction center subunit IX (44 aa).

The helical transmembrane segment at 7–27 (YLSVAPVVSTIWFGALAGLLI) threads the bilayer.

The protein belongs to the PsaJ family.

The protein localises to the plastid. The protein resides in the chloroplast thylakoid membrane. Functionally, may help in the organization of the PsaE and PsaF subunits. The protein is Photosystem I reaction center subunit IX of Cucumis sativus (Cucumber).